We begin with the raw amino-acid sequence, 261 residues long: Indole-3-glycerol phosphate synthase (261 aa).

The protein belongs to the TrpC family.

It carries out the reaction 1-(2-carboxyphenylamino)-1-deoxy-D-ribulose 5-phosphate + H(+) = (1S,2R)-1-C-(indol-3-yl)glycerol 3-phosphate + CO2 + H2O. It functions in the pathway amino-acid biosynthesis; L-tryptophan biosynthesis; L-tryptophan from chorismate: step 4/5. In Burkholderia vietnamiensis (strain G4 / LMG 22486) (Burkholderia cepacia (strain R1808)), this protein is Indole-3-glycerol phosphate synthase.